The following is a 74-amino-acid chain: Translation initiation factor IF-1 2 (74 aa).

An S1-like domain is found at 1–73 (MTKNKNVIEV…TRGRIVFRYR (73 aa)).

It belongs to the IF-1 family. In terms of assembly, component of the 30S ribosomal translation pre-initiation complex which assembles on the 30S ribosome in the order IF-2 and IF-3, IF-1 and N-formylmethionyl-tRNA(fMet); mRNA recruitment can occur at any time during PIC assembly.

It is found in the cytoplasm. Functionally, one of the essential components for the initiation of protein synthesis. Stabilizes the binding of IF-2 and IF-3 on the 30S subunit to which N-formylmethionyl-tRNA(fMet) subsequently binds. Helps modulate mRNA selection, yielding the 30S pre-initiation complex (PIC). Upon addition of the 50S ribosomal subunit IF-1, IF-2 and IF-3 are released leaving the mature 70S translation initiation complex. This is Translation initiation factor IF-1 2 from Streptomyces avermitilis (strain ATCC 31267 / DSM 46492 / JCM 5070 / NBRC 14893 / NCIMB 12804 / NRRL 8165 / MA-4680).